Consider the following 1657-residue polypeptide: Alsin (1657 aa).

RCC1 repeat units follow at residues 60–109, 110–168, and 169–219; these read GEVY…VTDN, GVAY…LSIS, and REIW…LVQC. A disordered region spans residues 432-481; the sequence is TGAQAGSSAIGPEGLKDSREEQVKQESMQGKKSSSLVDIREEETEGGSRR. Residues 445–455 show a composition bias toward basic and acidic residues; it reads GLKDSREEQVK. Polar residues predominate over residues 456–467; that stretch reads QESMQGKKSSSL. 4 positions are modified to phosphoserine: Ser-465, Ser-466, Ser-483, and Ser-492. Position 510 is a phosphothreonine (Thr-510). RCC1 repeat units lie at residues 526–577 and 578–628; these read TEVW…LTAK and SQVY…LVDT. N6-acetyllysine is present on Lys-533. In terms of domain architecture, DH spans 690–885; it reads GYIASLHELA…ECLALHLGRK (196 aa). A PH domain is found at 901–1007; the sequence is GKMTDSLRKP…RAISQAVDQA (107 aa). 8 MORN repeats span residues 1049-1071, 1072-1094, 1100-1122, 1123-1145, 1151-1173, 1175-1197, 1198-1220, and 1221-1244; these read YDGR…DGKM, YSGM…NKAM, YVGH…SGEV, FEGC…KLTS, FIGQ…TRGE, YMGM…FGLY, YEGN…DDTI, and YEGE…NGDY. Ser-1335 carries the post-translational modification Phosphoserine. The region spanning 1513–1657 is the VPS9 domain; that stretch reads KQPDIALLGF…YYQIQREKLN (145 aa).

Forms a heteromeric complex with ALS2CL. Interacts with ALS2CL.

In terms of biological role, may act as a GTPase regulator. Controls survival and growth of spinal motoneurons. The sequence is that of Alsin (ALS2) from Pan troglodytes (Chimpanzee).